A 624-amino-acid polypeptide reads, in one-letter code: Chaperone protein HtpG (624 aa).

The a; substrate-binding stretch occupies residues 1 to 336; it reads MKTQKKEVYN…SSDLPLNISR (336 aa). The tract at residues 337 to 552 is b; that stretch reads EILQDNSITE…STEMTTQMAK (216 aa). The interval 553–624 is c; sequence LFSAAGQSVP…ISRMNKLLIK (72 aa).

This sequence belongs to the heat shock protein 90 family. In terms of assembly, homodimer.

It is found in the cytoplasm. Molecular chaperone. Has ATPase activity. The chain is Chaperone protein HtpG from Buchnera aphidicola subsp. Acyrthosiphon pisum (strain APS) (Acyrthosiphon pisum symbiotic bacterium).